The primary structure comprises 597 residues: ATP-dependent lipid A-core flippase (597 aa).

6 consecutive transmembrane segments (helical) span residues 26–46 (WIFA…TGLA), 65–85 (IQII…ANFI), 144–164 (ILTI…MAYL), 166–186 (GLLT…IWWV), 250–270 (AISQ…VIHL), and 276–296 (MLAQ…MLLL). The ABC transmembrane type-1 domain maps to 29-311 (AASIITMAIY…LTKINGTLQR (283 aa)). The 237-residue stretch at 343–579 (IRFEHLSFCY…ESHYAGLYRL (237 aa)) folds into the ABC transporter domain. 377 to 384 (GHSGSGKS) contacts ATP.

This sequence belongs to the ABC transporter superfamily. Lipid exporter (TC 3.A.1.106) family. Homodimer.

Its subcellular location is the cell inner membrane. The enzyme catalyses ATP + H2O + lipid A-core oligosaccharideSide 1 = ADP + phosphate + lipid A-core oligosaccharideSide 2.. Involved in lipopolysaccharide (LPS) biosynthesis. Translocates lipid A-core from the inner to the outer leaflet of the inner membrane. Transmembrane domains (TMD) form a pore in the inner membrane and the ATP-binding domain (NBD) is responsible for energy generation. This chain is ATP-dependent lipid A-core flippase, found in Nitrosococcus oceani (strain ATCC 19707 / BCRC 17464 / JCM 30415 / NCIMB 11848 / C-107).